The primary structure comprises 657 residues: Glycogen debranching enzyme (657 aa).

Asp336 acts as the Nucleophile in catalysis. The active-site Proton donor is the Glu371. A disordered region spans residues 460 to 479 (ANGEENRDGTNNNYSNNHGK).

This sequence belongs to the glycosyl hydrolase 13 family.

It catalyses the reaction Hydrolysis of (1-&gt;6)-alpha-D-glucosidic linkages to branches with degrees of polymerization of three or four glucose residues in limit dextrin.. Its pathway is glycan degradation; glycogen degradation. Its function is as follows. Removes maltotriose and maltotetraose chains that are attached by 1,6-alpha-linkage to the limit dextrin main chain, generating a debranched limit dextrin. This Escherichia coli O81 (strain ED1a) protein is Glycogen debranching enzyme.